Reading from the N-terminus, the 245-residue chain is 2,3,4,5-tetrahydropyridine-2,6-dicarboxylate N-acetyltransferase (245 aa).

Belongs to the transferase hexapeptide repeat family. DapH subfamily.

The enzyme catalyses (S)-2,3,4,5-tetrahydrodipicolinate + acetyl-CoA + H2O = L-2-acetamido-6-oxoheptanedioate + CoA. The protein operates within amino-acid biosynthesis; L-lysine biosynthesis via DAP pathway; LL-2,6-diaminopimelate from (S)-tetrahydrodipicolinate (acetylase route): step 1/3. Functionally, catalyzes the transfer of an acetyl group from acetyl-CoA to tetrahydrodipicolinate. The chain is 2,3,4,5-tetrahydropyridine-2,6-dicarboxylate N-acetyltransferase from Methanopyrus kandleri (strain AV19 / DSM 6324 / JCM 9639 / NBRC 100938).